The chain runs to 115 residues: Large ribosomal subunit protein P2 (115 aa).

M1 is modified (N-acetylmethionine). S19 is subject to Phosphoserine. K21 carries the post-translational modification N6-acetyllysine; alternate. Residue K21 is modified to N6-succinyllysine; alternate. Low complexity predominate over residues A76–A90. The segment at A76–D115 is disordered. A phosphoserine mark is found at S79 and S86. The span at A91–E101 shows a compositional bias: basic and acidic residues. Phosphoserine is present on residues S102 and S105.

It belongs to the eukaryotic ribosomal protein P1/P2 family. In terms of assembly, heterodimer with RPLP1 at the lateral ribosomal stalk of the large ribosomal subunit.

Plays an important role in the elongation step of protein synthesis. This Rattus norvegicus (Rat) protein is Large ribosomal subunit protein P2 (Rplp2).